The sequence spans 540 residues: Glucose-6-phosphate isomerase (540 aa).

Glu351 (proton donor) is an active-site residue. Residues His382 and Lys506 contribute to the active site.

Belongs to the GPI family.

The protein localises to the cytoplasm. The enzyme catalyses alpha-D-glucose 6-phosphate = beta-D-fructose 6-phosphate. It functions in the pathway carbohydrate biosynthesis; gluconeogenesis. Its pathway is carbohydrate degradation; glycolysis; D-glyceraldehyde 3-phosphate and glycerone phosphate from D-glucose: step 2/4. Functionally, catalyzes the reversible isomerization of glucose-6-phosphate to fructose-6-phosphate. This is Glucose-6-phosphate isomerase from Corynebacterium glutamicum (strain ATCC 13032 / DSM 20300 / JCM 1318 / BCRC 11384 / CCUG 27702 / LMG 3730 / NBRC 12168 / NCIMB 10025 / NRRL B-2784 / 534).